The primary structure comprises 243 residues: uncharacterized protein (243 aa).

The tract at residues 157 to 181 is disordered; the sequence is SEETKEQPDATTSEKSRSPECPKTT.

This is an uncharacterized protein from Rattus norvegicus (Rat).